Reading from the N-terminus, the 235-residue chain is Orotidine 5'-phosphate decarboxylase (235 aa).

Residues aspartate 12, lysine 34, aspartate 61–threonine 70, threonine 116, arginine 177, glutamine 186, glycine 206, and arginine 207 contribute to the substrate site. The Proton donor role is filled by lysine 63.

Belongs to the OMP decarboxylase family. Type 1 subfamily. Homodimer.

The enzyme catalyses orotidine 5'-phosphate + H(+) = UMP + CO2. The protein operates within pyrimidine metabolism; UMP biosynthesis via de novo pathway; UMP from orotate: step 2/2. In terms of biological role, catalyzes the decarboxylation of orotidine 5'-monophosphate (OMP) to uridine 5'-monophosphate (UMP). The protein is Orotidine 5'-phosphate decarboxylase of Rhizobium johnstonii (strain DSM 114642 / LMG 32736 / 3841) (Rhizobium leguminosarum bv. viciae).